We begin with the raw amino-acid sequence, 317 residues long: N-acetylmuramoyl-L-alanine amidase XlyB (317 aa).

Residues 1–39 form the signal peptide; it reads MSIPVKKNLVSEAKYALKCPNAMSAEYITIHNTANDASA. Residues 40–142 form the N-acetylmuramoyl-L-alanine amidase domain; that stretch reads ANEISYMIGN…QDWSGKYCPH (103 aa). The region spanning 177–221 is the LysM domain; that stretch reads SEYHVKKGDTLSGIAASHGASVKTLQSINHITDPNHIKIGQVIKL.

This sequence belongs to the N-acetylmuramoyl-L-alanine amidase 2 family.

It is found in the secreted. The catalysed reaction is Hydrolyzes the link between N-acetylmuramoyl residues and L-amino acid residues in certain cell-wall glycopeptides.. In terms of biological role, autolysins are involved in some important biological processes such as cell separation, cell-wall turnover, competence for genetic transformation, formation of the flagella and sporulation. The polypeptide is N-acetylmuramoyl-L-alanine amidase XlyB (xlyB) (Bacillus subtilis (strain 168)).